The following is a 354-amino-acid chain: Uroporphyrinogen decarboxylase (354 aa).

Substrate-binding positions include 27 to 31 (RQAGR), Phe-46, Asp-77, Tyr-153, Thr-208, and His-326.

The protein belongs to the uroporphyrinogen decarboxylase family. In terms of assembly, homodimer.

It is found in the cytoplasm. It carries out the reaction uroporphyrinogen III + 4 H(+) = coproporphyrinogen III + 4 CO2. It participates in porphyrin-containing compound metabolism; protoporphyrin-IX biosynthesis; coproporphyrinogen-III from 5-aminolevulinate: step 4/4. Functionally, catalyzes the decarboxylation of four acetate groups of uroporphyrinogen-III to yield coproporphyrinogen-III. This is Uroporphyrinogen decarboxylase from Neisseria meningitidis serogroup B (strain ATCC BAA-335 / MC58).